The chain runs to 1125 residues: ATP-dependent DNA helicase Hel308 (1125 aa).

The Q motif motif lies at 1-29; it reads MKVDELPIDERIKRVIKERGIEELYPPQA. Residues Gln-28 and 46–53 each bind ATP; that span reads IPTASGKT. In terms of domain architecture, Helicase ATP-binding spans 33–197; sequence KSGVLEGKNL…WLDASLVVSD (165 aa). A DEAH box motif is present at residues 145–148; it reads DEVH. The 215-residue stretch at 226–440 folds into the Helicase C-terminal domain; sequence NWESLVLDAV…ELKERLESET (215 aa). In terms of domain architecture, DOD-type homing endonuclease spans 500-640; that stretch reads LIGLWIAEGS…LQLLVASLGY (141 aa).

The protein belongs to the helicase family. Hel308 subfamily. In terms of assembly, monomer. In terms of processing, this protein undergoes a protein self splicing that involves a post-translational excision of the intervening region (intein) followed by peptide ligation.

It carries out the reaction Couples ATP hydrolysis with the unwinding of duplex DNA by translocating in the 3'-5' direction.. It catalyses the reaction ATP + H2O = ADP + phosphate + H(+). DNA-dependent ATPase and 3'-5' DNA helicase that may be involved in repair of stalled replication forks. In Thermococcus kodakarensis (strain ATCC BAA-918 / JCM 12380 / KOD1) (Pyrococcus kodakaraensis (strain KOD1)), this protein is ATP-dependent DNA helicase Hel308.